Reading from the N-terminus, the 491-residue chain is Hydroxymethylglutaryl-CoA synthase (491 aa).

Glu-127 serves as the catalytic Proton donor/acceptor. Cys-159 functions as the Acyl-thioester intermediate in the catalytic mechanism. The (3S)-3-hydroxy-3-methylglutaryl-CoA site is built by Cys-159, Thr-201, and Ser-250. Residue Ser-276 is modified to Phosphoserine. Catalysis depends on His-296, which acts as the Proton donor/acceptor. Residues His-296, Lys-305, Asn-371, and Ser-405 each coordinate (3S)-3-hydroxy-3-methylglutaryl-CoA.

This sequence belongs to the thiolase-like superfamily. HMG-CoA synthase family.

The catalysed reaction is acetoacetyl-CoA + acetyl-CoA + H2O = (3S)-3-hydroxy-3-methylglutaryl-CoA + CoA + H(+). Its pathway is metabolic intermediate biosynthesis; (R)-mevalonate biosynthesis; (R)-mevalonate from acetyl-CoA: step 2/3. Its function is as follows. Hydroxymethylglutaryl-CoA synthase; part of the first module of ergosterol biosynthesis pathway that includes the early steps of the pathway, conserved across all eukaryotes, and which results in the formation of mevalonate from acetyl-coenzyme A (acetyl-CoA). ERG13 condenses acetyl-CoA with acetoacetyl-CoA to form hydroxymethylglutaryl-CoA (HMG-CoA). The first module starts with the action of the cytosolic acetyl-CoA acetyltransferase ERG10 that catalyzes the formation of acetoacetyl-CoA. The hydroxymethylglutaryl-CoA synthase ERG13 then condenses acetyl-CoA with acetoacetyl-CoA to form HMG-CoA. The rate-limiting step of the early module is the reduction to mevalonate by the 3-hydroxy-3-methylglutaryl-coenzyme A (HMG-CoA) reductases HMG1 and HMG2 which are derived from a single ancestral HMGR gene by gene duplication. This Saccharomyces cerevisiae (strain ATCC 204508 / S288c) (Baker's yeast) protein is Hydroxymethylglutaryl-CoA synthase.